A 179-amino-acid polypeptide reads, in one-letter code: Orotate phosphoribosyltransferase (179 aa).

Residues R94, K95, K98, H100, and 120 to 128 (EDTSTTGNS) contribute to the 5-phospho-alpha-D-ribose 1-diphosphate site. Residues T124 and R152 each contribute to the orotate site.

This sequence belongs to the purine/pyrimidine phosphoribosyltransferase family. PyrE subfamily. In terms of assembly, homodimer. It depends on Mg(2+) as a cofactor.

The enzyme catalyses orotidine 5'-phosphate + diphosphate = orotate + 5-phospho-alpha-D-ribose 1-diphosphate. The protein operates within pyrimidine metabolism; UMP biosynthesis via de novo pathway; UMP from orotate: step 1/2. In terms of biological role, catalyzes the transfer of a ribosyl phosphate group from 5-phosphoribose 1-diphosphate to orotate, leading to the formation of orotidine monophosphate (OMP). The chain is Orotate phosphoribosyltransferase from Mycobacterium avium (strain 104).